Here is a 593-residue protein sequence, read N- to C-terminus: ESX-1 secretion system protein EccCb1 (593 aa).

2 FtsK domains span residues 66–260 and 350–546; these read RQEV…NETQ and QVPL…EKND. Residues 85–92 and 377–384 contribute to the ATP site; these read GAPQTGKS and GAPKSGKT.

In terms of assembly, part of the ESX-1 / type VII secretion system (T7SS), which is composed of cytosolic and membrane components. The ESX-1 membrane complex is composed of EccB1, EccCa1, EccCb1, EccD1 and EccE1.

The protein resides in the cytoplasm. Part of the ESX-1 / type VII specialized secretion system (T7SS), which exports several proteins including EsxA and EsxB. Plays a role in DNA conjugation, in both donor and recipient strains. The sequence is that of ESX-1 secretion system protein EccCb1 from Mycolicibacterium smegmatis (strain ATCC 700084 / mc(2)155) (Mycobacterium smegmatis).